A 146-amino-acid polypeptide reads, in one-letter code: uncharacterized protein (146 aa).

The segment covering 86–96 (EFDSPMDEEEE) has biased composition (acidic residues). Residues 86–124 (EFDSPMDEEEETKPREASLDQTAPKKSKKEELLVKNNNF) are disordered.

This is an uncharacterized protein from Ostreid herpesvirus 1 (isolate France) (OsHV-1).